A 304-amino-acid polypeptide reads, in one-letter code: Arginine-binding protein ArgT (304 aa).

A signal peptide spans 1-26 (MRFPKIPKRAVAATVGIVATSFTLAS). The N-palmitoyl cysteine moiety is linked to residue Cys-27. The S-diacylglycerol cysteine moiety is linked to residue Cys-27.

The protein belongs to the bacterial solute-binding protein 3 family. As to quaternary structure, the complex is probably composed of two ATP-binding proteins (ArgV), two transmembrane proteins (ArgU) and a solute-binding protein (ArgT).

The protein resides in the cell membrane. Part of the ABC transporter complex ArgTUV involved in L-arginine import. May also transport L-citrulline. Binds L-arginine and its molecular precursor L-citrulline, but not L-histidine, L-glutamate, L-glutamine, L-lysine or L-cysteine. The sequence is that of Arginine-binding protein ArgT from Corynebacterium glutamicum (strain ATCC 13032 / DSM 20300 / JCM 1318 / BCRC 11384 / CCUG 27702 / LMG 3730 / NBRC 12168 / NCIMB 10025 / NRRL B-2784 / 534).